Reading from the N-terminus, the 135-residue chain is Large ribosomal subunit protein uL16c (135 aa).

The protein belongs to the universal ribosomal protein uL16 family. As to quaternary structure, part of the 50S ribosomal subunit.

It is found in the plastid. The protein resides in the chloroplast. This Cucumis sativus (Cucumber) protein is Large ribosomal subunit protein uL16c.